Reading from the N-terminus, the 393-residue chain is Selenide, water dikinase (393 aa).

The interval 1 to 21 (MSEKEGKVIPETNGMKRPRFD) is disordered. Cys42 is an active-site residue. Residues Lys45, 68-70 (GMD), Asp93, Asp116, and 167-170 (GGQT) each bind ATP. Asp70 contributes to the Mg(2+) binding site. Asp116 contacts Mg(2+). Asp273 provides a ligand contact to Mg(2+).

This sequence belongs to the selenophosphate synthase 1 family. Class I subfamily. In terms of assembly, homodimer. Requires Mg(2+) as cofactor.

The catalysed reaction is hydrogenselenide + ATP + H2O = selenophosphate + AMP + phosphate + 2 H(+). Its function is as follows. Synthesizes selenophosphate from selenide and ATP. The protein is Selenide, water dikinase of Trypanosoma brucei brucei (strain 927/4 GUTat10.1).